The primary structure comprises 360 residues: Phosphoserine aminotransferase (360 aa).

L-glutamate is bound at residue R42. Pyridoxal 5'-phosphate-binding positions include 76–77 (AS), W102, T152, D172, and Q195. K196 carries the post-translational modification N6-(pyridoxal phosphate)lysine. Position 237–238 (237–238 (NT)) interacts with pyridoxal 5'-phosphate.

This sequence belongs to the class-V pyridoxal-phosphate-dependent aminotransferase family. SerC subfamily. In terms of assembly, homodimer. Pyridoxal 5'-phosphate is required as a cofactor.

It is found in the cytoplasm. It carries out the reaction O-phospho-L-serine + 2-oxoglutarate = 3-phosphooxypyruvate + L-glutamate. The enzyme catalyses 4-(phosphooxy)-L-threonine + 2-oxoglutarate = (R)-3-hydroxy-2-oxo-4-phosphooxybutanoate + L-glutamate. It participates in amino-acid biosynthesis; L-serine biosynthesis; L-serine from 3-phospho-D-glycerate: step 2/3. Its function is as follows. Catalyzes the reversible conversion of 3-phosphohydroxypyruvate to phosphoserine and of 3-hydroxy-2-oxo-4-phosphonooxybutanoate to phosphohydroxythreonine. This chain is Phosphoserine aminotransferase, found in Bacillus cereus (strain ATCC 14579 / DSM 31 / CCUG 7414 / JCM 2152 / NBRC 15305 / NCIMB 9373 / NCTC 2599 / NRRL B-3711).